The primary structure comprises 318 residues: MLHHHCRRNPELQEELQIQAAVAAGDVHTVRKMLEQGYSPNGRDANGWTLLHFSAARGKERCVRVFLEHGADPTVKDLIGGFTALHYAAMHGRARIARLMLESEYRSDIINAKSNDGWTPLHVAAHYGRDSFVRLLLEFKAEVDPLSDKGTTPLQLAIIRERSSCVKILLDHNANIDIQNGFLLRYAVIKSNHSYCRMFLQRGADTNLGRLEDGQTPLHLSALRDDVLCARMLYNYGADTNTRNYEGQTPLAVSISISGSSRPCLDFLQEVTRQPRNLQDLCRIKIRQCIGLQNLKLLDELPIAKVMKDYLKHKFDDI.

ANK repeat units lie at residues 13 to 42 (QEEL…SPNG), 46 to 75 (NGWT…DPTV), 80 to 109 (GGFT…RSDI), 116 to 145 (DGWT…EVDP), 149 to 178 (KGTT…NIDI), 180 to 208 (NGFL…DTNL), and 213 to 242 (DGQT…DTNT). The 54-residue stretch at 265 to 318 (LDFLQEVTRQPRNLQDLCRIKIRQCIGLQNLKLLDELPIAKVMKDYLKHKFDDI) folds into the SOCS box domain.

The protein belongs to the ankyrin SOCS box (ASB) family. Interacts with CUL5. Interacts with RNF7. Interacts with PSRC1.

It functions in the pathway protein modification; protein ubiquitination. Probable substrate-recognition component of a SCF-like ECS (Elongin-Cullin-SOCS-box protein) E3 ubiquitin-protein ligase complex which mediates the ubiquitination and subsequent proteasomal degradation of target proteins. Plays a role in spindle dynamics and genome integrity by targeting the mitotic progression protein PSRC1 for proteasomal degradation in a cell cycle-dependent manner. Also participates in meiosis by mediating the proper attachment between kinetochores and microtubules. In Homo sapiens (Human), this protein is Ankyrin repeat and SOCS box protein 7 (ASB7).